The chain runs to 629 residues: Arginyl-tRNA--protein transferase 1 (629 aa).

2 disordered regions span residues 274-298 (QNNS…TNEP) and 353-405 (PDES…ITKE). Residues 282-295 (TTTATTATTTTTTT) show a composition bias toward low complexity. The span at 356–396 (SYDDYVYDGKDDDDDDDDKDEKEDDEDEDQEDDEDEDDGNN) shows a compositional bias: acidic residues.

It belongs to the R-transferase family.

It carries out the reaction an N-terminal L-alpha-aminoacyl-[protein] + L-arginyl-tRNA(Arg) = an N-terminal L-arginyl-L-aminoacyl-[protein] + tRNA(Arg) + H(+). Involved in the post-translational conjugation of arginine to the N-terminal aspartate or glutamate of a protein. This arginylation is required for degradation of the protein via the ubiquitin pathway. Does not arginylate cysteine residues. The sequence is that of Arginyl-tRNA--protein transferase 1 (ate1) from Dictyostelium discoideum (Social amoeba).